The primary structure comprises 143 residues: Transcriptional regulator MraZ (143 aa).

SpoVT-AbrB domains are found at residues 5–47 and 76–119; these read EYSH…PQKE and AAEC…SQEL.

It belongs to the MraZ family. In terms of assembly, forms oligomers.

It localises to the cytoplasm. The protein localises to the nucleoid. The sequence is that of Transcriptional regulator MraZ from Carboxydothermus hydrogenoformans (strain ATCC BAA-161 / DSM 6008 / Z-2901).